A 93-amino-acid chain; its full sequence is Alpha-defensin 7 (93 aa).

A signal peptide spans 1-19 (MKTLILLSALVLLAFQVQA). A propeptide spanning residues 20 to 58 (DPIQNTDEETKTEEQPGEDDQAVSVSFGDPEGSSLQEES) is cleaved from the precursor. A disordered region spans residues 22-56 (IQNTDEETKTEEQPGEDDQAVSVSFGDPEGSSLQE). Intrachain disulfides connect C64–C92, C66–C81, and C71–C91.

Belongs to the alpha-defensin family. Paneth cells of the small bowel.

The protein localises to the secreted. Probably contributes to the antimicrobial barrier function of the small bowel mucosa. This is Alpha-defensin 7 (Defa7) from Mus musculus (Mouse).